The following is a 693-amino-acid chain: MRGRGSRDTGTQSAAFASRPVRTTVDMQAQRAPLMEVKRNLELSTTLVKSSSRLPLPGSRLKRGPDQMEDGLEPAKKRTRGMGTVTKVDTSRPRGPPLSAVSTAAQKGPRKTGPRGCSAVGPVLRNQKPAPAAPAQKPGTSTAPAVAGKKPGKRPAWDLKGQLCDLHEELKQYREKTQTLDRENQGLREQLREVQEQATTLGTERNTLEEELASVRRRAEQSQQKLETLGARVLELEECLGTKERLVQELQTERLQLQEERSTLSTQLEEREREFQASEAALSSSRAEVLCLRQKTAAQVTLLAEQGDRLYGLEMERRRLHNQLQELKGNIRVFCRVRPVLEGESTPSPGFLVFPPGPAGPSDPPTRLCLSRSDDRRSTLTRAPAAATRHDFSFDRVFPPGSKQEEVFEEISMLVQSALDGYPVCIFAYGQTGSGKTFTMEGGPRGDPQLEGLIPRAMRHLFSVAQEMSGQGWTYSFVASYVEIYNETVRDLLATGTRKGQGGDCEIRRAGPGSEELTVTNARYVPVSCEKEVEALLHLAQQNRAVARTAQNERSSRSHSVFQLQISGEHAARGLQCGAPLNLVDLAGSERLDPGLTLGPGERDRLRETQAINSSLSTLGLVIMALSNKESHVPYRNSKLTYLLQNSLGGSAKMLMFVNISPLEENVSESLNSLRFASKVNQCVIGTAQANKK.

Disordered stretches follow at residues 1-24 and 48-156; these read MRGRGSRDTGTQSAAFASRPVRTT and VKSS…KRPA. Low complexity-rich tracts occupy residues 49–59 and 127–138; these read KSSSRLPLPGS and QKPAPAAPAQKP. 2 positions are modified to phosphoserine: serine 52 and serine 59. Residues 165 to 334 are a coiled coil; it reads DLHEELKQYR…QELKGNIRVF (170 aa). The Kinesin motor domain maps to 330-683; that stretch reads NIRVFCRVRP…LRFASKVNQC (354 aa). Threonine 379 carries the phosphothreonine modification. 430–437 provides a ligand contact to ATP; it reads GQTGSGKT.

It belongs to the TRAFAC class myosin-kinesin ATPase superfamily. Kinesin family. NCD subfamily. Binds NUBP1 and NUBP2. Interacts with PPP1R42.

The protein localises to the nucleus. The protein resides in the cytoplasm. It localises to the cytoskeleton. It is found in the microtubule organizing center. Its subcellular location is the centrosome. The protein localises to the spindle. The protein resides in the early endosome. Minus end-directed microtubule-dependent motor required for bipolar spindle formation. May contribute to movement of early endocytic vesicles. Regulates cilium formation and structure. The protein is Kinesin-like protein KIFC1 of Rattus norvegicus (Rat).